A 177-amino-acid chain; its full sequence is Transmembrane protein 196 (177 aa).

Helical transmembrane passes span 11–31 (LLVL…VGAV), 47–67 (SSPV…IFCA), 73–93 (LIMI…ILNI), and 106–126 (LYSL…GCTI). The segment covering 152–162 (HSHEMTEKDTE) has biased composition (basic and acidic residues). A disordered region spans residues 152-177 (HSHEMTEKDTENITNGGGPLALNGRV).

Its subcellular location is the cytoplasm. It localises to the membrane. The chain is Transmembrane protein 196 (tmem196) from Xenopus tropicalis (Western clawed frog).